Consider the following 166-residue polypeptide: Large ribosomal subunit protein uL11 (166 aa).

This sequence belongs to the universal ribosomal protein uL11 family.

The protein is Large ribosomal subunit protein uL11 (rpl12) of Dictyostelium discoideum (Social amoeba).